A 175-amino-acid polypeptide reads, in one-letter code: ATP synthase subunit b 1 (175 aa).

A helical transmembrane segment spans residues 26–48; the sequence is IINLAIIIGVLYVYGSKFIGNIL.

The protein belongs to the ATPase B chain family. F-type ATPases have 2 components, F(1) - the catalytic core - and F(0) - the membrane proton channel. F(1) has five subunits: alpha(3), beta(3), gamma(1), delta(1), epsilon(1). F(0) has four main subunits: a(1), b(1), b'(1) and c(10-14). The alpha and beta chains form an alternating ring which encloses part of the gamma chain. F(1) is attached to F(0) by a central stalk formed by the gamma and epsilon chains, while a peripheral stalk is formed by the delta, b and b' chains.

Its subcellular location is the cellular thylakoid membrane. Its function is as follows. F(1)F(0) ATP synthase produces ATP from ADP in the presence of a proton or sodium gradient. F-type ATPases consist of two structural domains, F(1) containing the extramembraneous catalytic core and F(0) containing the membrane proton channel, linked together by a central stalk and a peripheral stalk. During catalysis, ATP synthesis in the catalytic domain of F(1) is coupled via a rotary mechanism of the central stalk subunits to proton translocation. In terms of biological role, component of the F(0) channel, it forms part of the peripheral stalk, linking F(1) to F(0). In Picosynechococcus sp. (strain ATCC 27264 / PCC 7002 / PR-6) (Agmenellum quadruplicatum), this protein is ATP synthase subunit b 1.